Reading from the N-terminus, the 317-residue chain is Zinc transporter ZIP3 (317 aa).

The Extracellular segment spans residues 1-3; sequence MSQ. A helical membrane pass occupies residues 4 to 24; that stretch reads LLVAKVLCMVGVFFFMLLGSL. Over 25-42 the chain is Cytoplasmic; the sequence is LPVKVIEADFEKAHRSKK. The chain crosses the membrane as a helical span at residues 43 to 63; the sequence is VLSLCNTFGGGVFLATCFNAL. The Extracellular portion of the chain corresponds to 64–85; the sequence is LPAVRDKLQQVLSLGHISTDYP. A helical transmembrane segment spans residues 86–106; the sequence is LAETLMMVGFFLTVFVEQLVL. The Cytoplasmic portion of the chain corresponds to 107–172; it reads TFRRERPPFI…RELGRPGPLR (66 aa). S125 and S129 each carry phosphoserine. Residues 173-193 form a helical membrane-spanning segment; it reads LLSLVFALSAHSVFEGLALGL. Residues 194–199 lie on the Extracellular side of the membrane; the sequence is QEEGER. A helical transmembrane segment spans residues 200–220; it reads VVSLFVGVAVHETLVAVALGI. The Cytoplasmic portion of the chain corresponds to 221 to 232; sequence SMARSAVPLRDA. A helical membrane pass occupies residues 233 to 253; it reads AKLAVTVSAMIPVGIGLGLGI. Residues 254 to 265 lie on the Extracellular side of the membrane; sequence ESARSVASSVAS. A helical membrane pass occupies residues 266–286; sequence ALLQGLAGGTFLFVTFLEILA. The Cytoplasmic portion of the chain corresponds to 287–294; it reads KELEERSE. Residues 295 to 315 traverse the membrane as a helical segment; that stretch reads QLLKVLFLVLGYAVLAGMVFL. The Extracellular segment spans residues 316 to 317; sequence KW.

This sequence belongs to the ZIP transporter (TC 2.A.5) family.

The protein resides in the cell membrane. Its subcellular location is the apical cell membrane. It catalyses the reaction Zn(2+)(in) = Zn(2+)(out). Transporter for the divalent cation Zn(2+). Mediates the influx of Zn(2+) into cells from extracellular space. Controls Zn(2+) accumulation into dentate gyrus granule cells in the hippocampus. Mediates Zn(2+) reuptake from the secreted milk within the alveolar lumen. This chain is Zinc transporter ZIP3 (Slc39a3), found in Rattus norvegicus (Rat).